A 383-amino-acid chain; its full sequence is UDP-N-acetylglucosamine--N-acetylmuramyl-(pentapeptide) pyrophosphoryl-undecaprenol N-acetylglucosamine transferase (383 aa).

UDP-N-acetyl-alpha-D-glucosamine is bound by residues 10-12 (TGG), Asn124, Arg165, Ser190, Ile245, and Gln290. A disordered region spans residues 364–383 (PFGQAREPGQKPARPPDLAS).

It belongs to the glycosyltransferase 28 family. MurG subfamily.

The protein resides in the cell inner membrane. It carries out the reaction di-trans,octa-cis-undecaprenyl diphospho-N-acetyl-alpha-D-muramoyl-L-alanyl-D-glutamyl-meso-2,6-diaminopimeloyl-D-alanyl-D-alanine + UDP-N-acetyl-alpha-D-glucosamine = di-trans,octa-cis-undecaprenyl diphospho-[N-acetyl-alpha-D-glucosaminyl-(1-&gt;4)]-N-acetyl-alpha-D-muramoyl-L-alanyl-D-glutamyl-meso-2,6-diaminopimeloyl-D-alanyl-D-alanine + UDP + H(+). The protein operates within cell wall biogenesis; peptidoglycan biosynthesis. Cell wall formation. Catalyzes the transfer of a GlcNAc subunit on undecaprenyl-pyrophosphoryl-MurNAc-pentapeptide (lipid intermediate I) to form undecaprenyl-pyrophosphoryl-MurNAc-(pentapeptide)GlcNAc (lipid intermediate II). This chain is UDP-N-acetylglucosamine--N-acetylmuramyl-(pentapeptide) pyrophosphoryl-undecaprenol N-acetylglucosamine transferase, found in Anaeromyxobacter sp. (strain K).